The primary structure comprises 260 residues: Coiled-coil domain-containing protein 127 (260 aa).

Positions 47 to 135 form a coiled coil; that stretch reads ESQKEIEKAR…QIIQEKSQRQ (89 aa).

In Rattus norvegicus (Rat), this protein is Coiled-coil domain-containing protein 127 (Ccdc127).